The chain runs to 354 residues: Tryptophan--tRNA ligase (354 aa).

Residues 13–15 (QPT) and 21–22 (GN) each bind ATP. The short motif at 14 to 22 (PTGNLHLGN) is the 'HIGH' region element. Position 137 (aspartate 137) interacts with L-tryptophan. ATP-binding positions include 149 to 151 (GDD), valine 208, and 217 to 221 (KMSKS). The short motif at 217–221 (KMSKS) is the 'KMSKS' region element.

The protein belongs to the class-I aminoacyl-tRNA synthetase family. In terms of assembly, homodimer.

The protein localises to the cytoplasm. It carries out the reaction tRNA(Trp) + L-tryptophan + ATP = L-tryptophyl-tRNA(Trp) + AMP + diphosphate + H(+). Functionally, catalyzes the attachment of tryptophan to tRNA(Trp). The sequence is that of Tryptophan--tRNA ligase from Rhizobium meliloti (strain 1021) (Ensifer meliloti).